We begin with the raw amino-acid sequence, 234 residues long: Leucyl/phenylalanyl-tRNA--protein transferase (234 aa).

This sequence belongs to the L/F-transferase family.

It localises to the cytoplasm. The enzyme catalyses N-terminal L-lysyl-[protein] + L-leucyl-tRNA(Leu) = N-terminal L-leucyl-L-lysyl-[protein] + tRNA(Leu) + H(+). It carries out the reaction N-terminal L-arginyl-[protein] + L-leucyl-tRNA(Leu) = N-terminal L-leucyl-L-arginyl-[protein] + tRNA(Leu) + H(+). The catalysed reaction is L-phenylalanyl-tRNA(Phe) + an N-terminal L-alpha-aminoacyl-[protein] = an N-terminal L-phenylalanyl-L-alpha-aminoacyl-[protein] + tRNA(Phe). Its function is as follows. Functions in the N-end rule pathway of protein degradation where it conjugates Leu, Phe and, less efficiently, Met from aminoacyl-tRNAs to the N-termini of proteins containing an N-terminal arginine or lysine. The chain is Leucyl/phenylalanyl-tRNA--protein transferase from Nitrosomonas eutropha (strain DSM 101675 / C91 / Nm57).